The chain runs to 513 residues: Protein phosphatase 1H (513 aa).

Residue Ser-7 is modified to Phosphoserine. The region spanning 77-506 is the PPM-type phosphatase domain; the sequence is ATGYAEVINA…DDISVYVIPL (430 aa). The tract at residues 109–133 is disordered; sequence TITSTPNRNSKRRSSLPNGEGLQLK. The residue at position 113 (Thr-113) is a Phosphothreonine. 2 positions are modified to phosphoserine: Ser-123 and Ser-210. Arg-212 is modified (omega-N-methylarginine). Ser-220 bears the Phosphoserine mark. Phosphothreonine is present on Thr-223. A Phosphoserine modification is found at Ser-421.

It belongs to the PP2C family.

The protein resides in the nucleus. Its subcellular location is the cytoplasm. It carries out the reaction O-phospho-L-seryl-[protein] + H2O = L-seryl-[protein] + phosphate. It catalyses the reaction O-phospho-L-threonyl-[protein] + H2O = L-threonyl-[protein] + phosphate. In terms of biological role, dephosphorylates CDKN1B at 'Thr-187', thus removing a signal for proteasomal degradation. The polypeptide is Protein phosphatase 1H (Ppm1h) (Mus musculus (Mouse)).